A 329-amino-acid chain; its full sequence is DNA-directed RNA polymerase subunit alpha (329 aa).

The interval 1-235 is alpha N-terminal domain (alpha-NTD); sequence MQGSVTEFLK…EQLDAFVDLR (235 aa). Residues 249 to 329 form an alpha C-terminal domain (alpha-CTD) region; sequence FDPILLRPVD…NWPPASIAED (81 aa).

Belongs to the RNA polymerase alpha chain family. Homodimer. The RNAP catalytic core consists of 2 alpha, 1 beta, 1 beta' and 1 omega subunit. When a sigma factor is associated with the core the holoenzyme is formed, which can initiate transcription.

It catalyses the reaction RNA(n) + a ribonucleoside 5'-triphosphate = RNA(n+1) + diphosphate. Functionally, DNA-dependent RNA polymerase catalyzes the transcription of DNA into RNA using the four ribonucleoside triphosphates as substrates. The protein is DNA-directed RNA polymerase subunit alpha of Aliivibrio fischeri (strain ATCC 700601 / ES114) (Vibrio fischeri).